A 463-amino-acid polypeptide reads, in one-letter code: Nuclear hormone receptor family member nhr-79 (463 aa).

The nuclear receptor DNA-binding region spans 3-81 (RGKCMVCDSP…AGMMRDLVQA (79 aa)). 2 consecutive NR C4-type zinc fingers follow at residues 6-27 (CMVCDSPNATNYHFGAQSCKAC) and 43-64 (CLGDGVHSCKIDHTLRLNCRHC). Residues 83 to 119 (REIKSDKGKNSRNSSQSEDFFSPPPEQPGPSNYFDQF) form a disordered region. The 261-residue stretch at 203–463 (YTEQVINLNM…ILKDMLKFQY (261 aa)) folds into the NR LBD domain.

Belongs to the nuclear hormone receptor family.

The protein resides in the nucleus. Its function is as follows. Orphan nuclear receptor. This is Nuclear hormone receptor family member nhr-79 (nhr-79) from Caenorhabditis elegans.